A 285-amino-acid chain; its full sequence is Diphthine methyl ester synthase (285 aa).

S-adenosyl-L-methionine contacts are provided by residues L9, D84, G87, 112–113 (SI), and L163. S171 carries the post-translational modification Phosphoserine. S-adenosyl-L-methionine-binding residues include V225 and H250.

This sequence belongs to the diphthine synthase family.

It catalyses the reaction 2-[(3S)-amino-3-carboxypropyl]-L-histidyl-[translation elongation factor 2] + 4 S-adenosyl-L-methionine = diphthine methyl ester-[translation elongation factor 2] + 4 S-adenosyl-L-homocysteine + 3 H(+). It functions in the pathway protein modification; peptidyl-diphthamide biosynthesis. Its function is as follows. S-adenosyl-L-methionine-dependent methyltransferase that catalyzes four methylations of the modified target histidine residue in translation elongation factor 2 (EF-2), to form an intermediate called diphthine methyl ester. The four successive methylation reactions represent the second step of diphthamide biosynthesis. This Homo sapiens (Human) protein is Diphthine methyl ester synthase (DPH5).